The following is an 815-amino-acid chain: Cell division cycle protein 48 (815 aa).

The disordered stretch occupies residues 1–30 (MNAPSTMTDKKPEVEHLQGENPPKDTYSAE). Basic and acidic residues predominate over residues 8-18 (TDKKPEVEHLQ). ATP-binding positions include 267–273 (PGTGKTL), asparagine 368, histidine 404, and 541–546 (GTGKTL). Residues 794–815 (DSADSNTNGPSFGNDGADDLYA) are disordered. Over residues 795–804 (SADSNTNGPS) the composition is skewed to polar residues.

Belongs to the AAA ATPase family. In terms of assembly, component of the ribosome quality control complex (RQC), composed of the E3 ubiquitin ligase rkr1/ltn1, rqc1 and mtr1/rqc2, as well as cdc48 and its ubiquitin-binding cofactors. RQC forms a stable complex with 60S ribosomal subunits. Interacts with ubx2 and ubx3. Interacts with lub1. Interacts with rbd2 (via C-terminal SHP box); the interaction is required for rbd2-mediated cleavage of sre1 and sre2.

Its subcellular location is the cytoplasm. The protein localises to the nucleus. It carries out the reaction ATP + H2O = ADP + phosphate + H(+). Its activity is regulated as follows. The first ATP-binding region has low ATPase activity. The second ATP-binding region is responsible for ATPase activity. ATP binding to the first ATP-binding region induces intrinsic activity of the second ATP-binding region. While ATP binding to the first ATP-binding region appears to prevent ATP hydrolysis by the second ATP-binding region, ADP-binding to first region promotes the coordinate and cooperative ATPase cycle of the second ATP-binding region. ATP binding to the first ATP-binding region induces a conformational change, promoting the rotation of the first ATP-binding region relative to the second ATP-binding region in the hexamer. Functionally, ATP-dependent chaperone which probably uses the energy provided by ATP hydrolysis to generate mechanical force to unfold substrate proteins, disassemble protein complexes, and disaggregate protein aggregates. By recruiting and promoting the degradation of ubiquitinated proteins, plays a role in the ubiquitin fusion degradation (UFD) pathway. Has a role in the endoplasmic reticulum-associated degradation (ERAD) pathway which mediates the cytoplasmic elimination of misfolded proteins exported from the ER. Involved in spindle disassembly. Component of the ribosome quality control complex (RQC), a ribosome-associated complex that mediates ubiquitination and extraction of incompletely synthesized nascent chains for proteasomal degradation. CDC48 may provide the mechanical force that dislodges the polyubiquitinated nascent peptides from the exit channel. Required for ribophagy, a process which relocalizes ribosomal particles into the vacuole for degradation in response to starvation. Has a role in substrate recognition mediating rbd2-dependent cleavage of sterol regulatory element-binding protein sre1 and sre2. This is Cell division cycle protein 48 from Schizosaccharomyces pombe (strain 972 / ATCC 24843) (Fission yeast).